Reading from the N-terminus, the 279-residue chain is Diaminopimelate epimerase (279 aa).

Residues Asn-13 and Asn-66 each contribute to the substrate site. Catalysis depends on Cys-75, which acts as the Proton donor. Substrate is bound by residues 76–77 (GN), Asn-164, Asn-197, and 215–216 (ER). Cys-224 acts as the Proton acceptor in catalysis. 225–226 (GT) lines the substrate pocket.

It belongs to the diaminopimelate epimerase family. In terms of assembly, homodimer.

It is found in the cytoplasm. The catalysed reaction is (2S,6S)-2,6-diaminopimelate = meso-2,6-diaminopimelate. Its pathway is amino-acid biosynthesis; L-lysine biosynthesis via DAP pathway; DL-2,6-diaminopimelate from LL-2,6-diaminopimelate: step 1/1. Functionally, catalyzes the stereoinversion of LL-2,6-diaminopimelate (L,L-DAP) to meso-diaminopimelate (meso-DAP), a precursor of L-lysine and an essential component of the bacterial peptidoglycan. The polypeptide is Diaminopimelate epimerase (Brachyspira hyodysenteriae (strain ATCC 49526 / WA1)).